The primary structure comprises 141 residues: Hemoglobin subunit alpha (141 aa).

In terms of domain architecture, Globin spans 1–141 (VLSPADKNNV…VSTVLTSKYR (141 aa)). Position 3 is a phosphoserine (S3). 2 positions are modified to N6-succinyllysine: K7 and K11. K16 is subject to N6-acetyllysine; alternate. K16 carries the N6-succinyllysine; alternate modification. Position 24 is a phosphotyrosine (Y24). S35 carries the post-translational modification Phosphoserine. K40 carries the N6-succinyllysine modification. S49 carries the phosphoserine modification. H58 contributes to the O2 binding site. H87 is a heme b binding site. A Phosphoserine modification is found at S102. A Phosphothreonine modification is found at T108. S124 and S131 each carry phosphoserine. T134 and T137 each carry phosphothreonine. Residue S138 is modified to Phosphoserine.

The protein belongs to the globin family. As to quaternary structure, heterotetramer of two alpha chains and two beta chains. In terms of tissue distribution, red blood cells.

Its function is as follows. Involved in oxygen transport from the lung to the various peripheral tissues. Hemopressin acts as an antagonist peptide of the cannabinoid receptor CNR1. Hemopressin-binding efficiently blocks cannabinoid receptor CNR1 and subsequent signaling. This Urocitellus townsendii (Townsend's ground squirrel) protein is Hemoglobin subunit alpha (HBA).